Consider the following 289-residue polypeptide: Golgi to ER traffic protein 2 (289 aa).

Residues M1 to R10 show a composition bias toward basic and acidic residues. Residues M1–S68 are disordered. At M1–Q153 the chain is on the cytoplasmic side. The segment covering R11–F21 has biased composition (basic residues). Polar residues predominate over residues I33–S68. The helical transmembrane segment at L154 to V173 threads the bilayer. Residues M174–N196 lie on the Lumenal side of the membrane. The helical transmembrane segment at F197–L216 threads the bilayer. The Cytoplasmic portion of the chain corresponds to L217–D263. Residues I264–Y284 traverse the membrane as a helical segment. Residues Y285–P289 lie on the Lumenal side of the membrane.

It belongs to the GET2 family. In terms of assembly, component of the Golgi to ER traffic (GET) complex, which is composed of GET1, GET2 and GET3. Within the complex, GET1 and GET2 form a heterotetramer which is stabilized by phosphatidylinositol binding and which binds to the GET3 homodimer.

It is found in the endoplasmic reticulum membrane. The protein resides in the golgi apparatus membrane. In terms of biological role, required for the post-translational delivery of tail-anchored (TA) proteins to the endoplasmic reticulum. Together with GET1, acts as a membrane receptor for soluble GET3, which recognizes and selectively binds the transmembrane domain of TA proteins in the cytosol. The GET complex cooperates with the HDEL receptor ERD2 to mediate the ATP-dependent retrieval of resident ER proteins that contain a C-terminal H-D-E-L retention signal from the Golgi to the ER. This Eremothecium gossypii (strain ATCC 10895 / CBS 109.51 / FGSC 9923 / NRRL Y-1056) (Yeast) protein is Golgi to ER traffic protein 2.